Reading from the N-terminus, the 132-residue chain is D-ribose pyranase (132 aa).

His-20 acts as the Proton donor in catalysis. Substrate is bound by residues Asp-28, His-99, and 121-123; that span reads YSN.

The protein belongs to the RbsD / FucU family. RbsD subfamily. Homodecamer.

The protein resides in the cytoplasm. It carries out the reaction beta-D-ribopyranose = beta-D-ribofuranose. Its pathway is carbohydrate metabolism; D-ribose degradation; D-ribose 5-phosphate from beta-D-ribopyranose: step 1/2. Catalyzes the interconversion of beta-pyran and beta-furan forms of D-ribose. The sequence is that of D-ribose pyranase from Lactococcus lactis subsp. lactis (strain IL1403) (Streptococcus lactis).